Here is a 439-residue protein sequence, read N- to C-terminus: tRNA modification GTPase MnmE (439 aa).

R26, E88, and R127 together coordinate (6S)-5-formyl-5,6,7,8-tetrahydrofolate. A TrmE-type G domain is found at G220–I367. Residue N230 participates in K(+) binding. GTP contacts are provided by residues N230–S235, T249–T255, and D274–G277. S234 lines the Mg(2+) pocket. K(+)-binding residues include T249, I251, and T254. A Mg(2+)-binding site is contributed by T255. K439 lines the (6S)-5-formyl-5,6,7,8-tetrahydrofolate pocket.

Belongs to the TRAFAC class TrmE-Era-EngA-EngB-Septin-like GTPase superfamily. TrmE GTPase family. In terms of assembly, homodimer. Heterotetramer of two MnmE and two MnmG subunits. K(+) serves as cofactor.

The protein resides in the cytoplasm. Exhibits a very high intrinsic GTPase hydrolysis rate. Involved in the addition of a carboxymethylaminomethyl (cmnm) group at the wobble position (U34) of certain tRNAs, forming tRNA-cmnm(5)s(2)U34. This Deinococcus geothermalis (strain DSM 11300 / CIP 105573 / AG-3a) protein is tRNA modification GTPase MnmE.